The primary structure comprises 55 residues: Serine protease inhibitor Kazal-type 1 (55 aa).

Positions 2-55 constitute a Kazal-like domain; it reads QGRDANCNYEFPGCPRNLEPVCGTDGNTYNNECLLCMENKKRDVPIRIQKDGPC. 3 disulfide bridges follow: Cys8/Cys37, Cys15/Cys34, and Cys23/Cys55.

It is found in the secreted. In terms of biological role, serine protease inhibitor which exhibits anti-trypsin activity. In the pancreas, protects against trypsin-catalyzed premature activation of zymogens. Functionally, in the male reproductive tract, binds to sperm heads where it modulates sperm capacitance by inhibiting calcium uptake and nitrogen oxide (NO) production. This is Serine protease inhibitor Kazal-type 1 (SPINK1) from Monodelphis domestica (Gray short-tailed opossum).